The sequence spans 168 residues: Mitochondrial import inner membrane translocase subunit TIM14 (168 aa).

Positions 1–12 are enriched in polar residues; sequence MSSQSNTGNSIE. The disordered stretch occupies residues 1–29; sequence MSSQSNTGNSIEAPQLPIPGQTNGSANVT. Residues 1-65 are Mitochondrial intermembrane-facing; the sequence is MSSQSNTGNS…QALNYMGEHP (65 aa). Residues 66-83 form a helical membrane-spanning segment; the sequence is VITGFGAFLTLYFTAGAY. Residues 84–168 are Mitochondrial matrix-facing; sequence KSISKGLNGG…DFLEKRGISK (85 aa). The J domain maps to 112-168; that stretch reads EALQILNLTENTLTKKKLKEVHRKIMLANHPDKGGSPFLATKINEAKDFLEKRGISK.

This sequence belongs to the TIM14 family. Homodimer and heterodimer with PAM16/TIM16. Homodimerization may not be relevant in vivo, while heterodimerization is essential for activity regulation of mtHSP70. Component of the PAM complex, at least composed of mtHsp70, MGE1, TIM44, PAM16, PAM17 and PAM18/TIM14. Interacts directly with mtHsp70. Interacts directly with TIM17 subunit of the TIM23 complex.

Its subcellular location is the mitochondrion inner membrane. Essential component of the PAM complex, a complex required for the translocation of transit peptide-containing proteins from the inner membrane into the mitochondrial matrix in an ATP-dependent manner. In the complex, it is required to stimulate activity of mtHSP70 (SSC1). In Saccharomyces cerevisiae (strain ATCC 204508 / S288c) (Baker's yeast), this protein is Mitochondrial import inner membrane translocase subunit TIM14 (PAM18).